The primary structure comprises 151 residues: Large ribosomal subunit protein uL13 (151 aa).

It belongs to the universal ribosomal protein uL13 family. As to quaternary structure, part of the 50S ribosomal subunit.

Its function is as follows. This protein is one of the early assembly proteins of the 50S ribosomal subunit, although it is not seen to bind rRNA by itself. It is important during the early stages of 50S assembly. This chain is Large ribosomal subunit protein uL13, found in Microchaete diplosiphon (Fremyella diplosiphon).